The primary structure comprises 324 residues: Alkanal monooxygenase beta chain (324 aa).

Belongs to the bacterial luciferase oxidoreductase family. Heterodimer of an alpha and a beta chain.

It carries out the reaction a long-chain fatty aldehyde + FMNH2 + O2 = a long-chain fatty acid + hnu + FMN + H2O + 2 H(+). In terms of biological role, light-emitting reaction in luminous bacteria. The specific role of the beta subunit is unknown, but it is absolutely required for bioluminescence activity. This is Alkanal monooxygenase beta chain (luxB) from Photorhabdus laumondii subsp. laumondii (strain DSM 15139 / CIP 105565 / TT01) (Photorhabdus luminescens subsp. laumondii).